The sequence spans 123 residues: Cliotide T4 (123 aa).

The signal sequence occupies residues M1–A28. The cyclopeptide (Gly-Asn) cross-link spans G29–N58. 3 cysteine pairs are disulfide-bonded: C32-C48, C36-C50, and C41-C55. Residues H59 to N123 constitute a propeptide, removed in mature form.

Post-translationally, contains 3 disulfide bonds. This is a cyclic peptide. Expressed in flower, stem, shoot, root, leaf, seed, pod and nodule (at protein level).

Functionally, probably participates in a plant defense mechanism. Active against Gram-negative bacteria E.coli ATCC 700926 (MIC=1.0 uM), K.pneumoniae ATTC 13883 (MIC=5.5 uM) and P.aeruginosa ATCC 39018 (MIC=7.5 uM). Has hemolytic and cytotoxic activity. In Clitoria ternatea (Butterfly pea), this protein is Cliotide T4.